Consider the following 360-residue polypeptide: Peptide chain release factor 1 (360 aa).

Glutamine 235 carries the N5-methylglutamine modification. The segment covering glutamate 281–arginine 307 has biased composition (basic and acidic residues). The tract at residues glutamate 281–phenylalanine 311 is disordered.

It belongs to the prokaryotic/mitochondrial release factor family. Methylated by PrmC. Methylation increases the termination efficiency of RF1.

It localises to the cytoplasm. Peptide chain release factor 1 directs the termination of translation in response to the peptide chain termination codons UAG and UAA. The polypeptide is Peptide chain release factor 1 (Rhizobium meliloti (strain 1021) (Ensifer meliloti)).